The sequence spans 147 residues: MAKFLLLNGPNLNLLGTREPQIYGSQTLAQICDTLREQAKAHGHVLEDFQSNAEHELVERVHRASREGIDFILINPGAFTHTSIALRDALLGVAIPFIEVHLSNVHAREPFRHKSYLSDVARGVIMGLGPKGYALALDAAIHLTQKN.

Residue Y23 is the Proton acceptor of the active site. 3 residues coordinate substrate: N75, H81, and D88. H101 acts as the Proton donor in catalysis. Residues 102 to 103 (LS) and R112 contribute to the substrate site.

It belongs to the type-II 3-dehydroquinase family. As to quaternary structure, homododecamer.

The enzyme catalyses 3-dehydroquinate = 3-dehydroshikimate + H2O. The protein operates within metabolic intermediate biosynthesis; chorismate biosynthesis; chorismate from D-erythrose 4-phosphate and phosphoenolpyruvate: step 3/7. Catalyzes a trans-dehydration via an enolate intermediate. The sequence is that of 3-dehydroquinate dehydratase from Thioalkalivibrio sulfidiphilus (strain HL-EbGR7).